We begin with the raw amino-acid sequence, 119 residues long: Large ribosomal subunit protein uL24 (119 aa).

The protein belongs to the universal ribosomal protein uL24 family. As to quaternary structure, part of the 50S ribosomal subunit.

In terms of biological role, one of two assembly initiator proteins, it binds directly to the 5'-end of the 23S rRNA, where it nucleates assembly of the 50S subunit. Its function is as follows. Located at the polypeptide exit tunnel on the outside of the subunit. The protein is Large ribosomal subunit protein uL24 of Methanococcus maripaludis (strain DSM 14266 / JCM 13030 / NBRC 101832 / S2 / LL).